Consider the following 450-residue polypeptide: Serine--tRNA ligase, cytoplasmic (450 aa).

238-240 (TSE) provides a ligand contact to L-serine. ATP-binding positions include 271–273 (RRE) and valine 287. Glutamate 294 contacts L-serine. Residue 358–361 (ELVS) coordinates ATP. L-serine is bound at residue threonine 396.

This sequence belongs to the class-II aminoacyl-tRNA synthetase family. Type-1 seryl-tRNA synthetase subfamily. In terms of assembly, homodimer. The tRNA molecule binds across the dimer.

The protein resides in the cytoplasm. The protein localises to the cytosol. It catalyses the reaction tRNA(Ser) + L-serine + ATP = L-seryl-tRNA(Ser) + AMP + diphosphate + H(+). Functionally, catalyzes the attachment of serine to tRNA(Ser) in a two-step reaction: serine is first activated by ATP to form Ser-AMP and then transferred to the acceptor end of tRNA(Ser). The sequence is that of Serine--tRNA ligase, cytoplasmic from Schizosaccharomyces pombe (strain 972 / ATCC 24843) (Fission yeast).